A 206-amino-acid chain; its full sequence is dITP/XTP pyrophosphatase (206 aa).

10-15 lines the substrate pocket; it reads SRNAKK. Asp75 acts as the Proton acceptor in catalysis. A Mg(2+)-binding site is contributed by Asp75. Substrate contacts are provided by residues Ser76, 158–161, Lys181, and 186–187; these read FGYD and HR.

This sequence belongs to the HAM1 NTPase family. As to quaternary structure, homodimer. Mg(2+) is required as a cofactor.

It carries out the reaction XTP + H2O = XMP + diphosphate + H(+). The enzyme catalyses dITP + H2O = dIMP + diphosphate + H(+). It catalyses the reaction ITP + H2O = IMP + diphosphate + H(+). Pyrophosphatase that catalyzes the hydrolysis of nucleoside triphosphates to their monophosphate derivatives, with a high preference for the non-canonical purine nucleotides XTP (xanthosine triphosphate), dITP (deoxyinosine triphosphate) and ITP. Seems to function as a house-cleaning enzyme that removes non-canonical purine nucleotides from the nucleotide pool, thus preventing their incorporation into DNA/RNA and avoiding chromosomal lesions. This chain is dITP/XTP pyrophosphatase, found in Nocardia farcinica (strain IFM 10152).